Here is an 844-residue protein sequence, read N- to C-terminus: MAEITVGQLAQQTNKEVSTLLKQLKSFGIEKSSEKDTLTPEEMKTLLDKINSAKNTVTRKKVTSLKLDGKHKINVSVKKKRRVAKKVEEQSPAKVEESIVEKPQAAVDVKDNKAVESVERNSVNLVQPQQEKPVTKPVIKDNGFKITAMPEVKIQENNSQDEEKSSEDKSTESKNNKKKSPKKVFTESGNNTNTKYKREEEEKKSKAKKASGKGFKKANPRQLSQLAGDLESFDEFGSKKGKLKAPKVKKQEFTMPVESAVKTIEIREGITVSDLANRMAVKGAEIVKVLFNMGVMATINQSLDQDTAVLIVEEMGHKYTLHNENALEEAVTTVDRSLHKKISRAPVVTIMGHVDHGKTSLLDYIRKARVVAGEAGGITQHIGAYSVKTSKGAITFLDTPGHEAFTSMRARGAKSTDIVILVVAADDGVMPQTEEAIQHAKAAGVPIVVAVNKIDKPDADPDKVVGELAQRNVIPESWGGDVMFANVSAKTGEGVAELLDAVLLQSEVLELEAFAEGLAEGVVIESRLEKGRGPVATVLVQNGSLKQGDNILCGTEYGRVRAMHDDLGKQIKVAGPATPVEILGLSGVPAAGDDMVVIENEKKAKELAAQRSQRQKEAKIAQEQSLKLSNMFSNMGKEGEQQTLKIILKGDVQGSVEAIRESLLKLSTDEVKVDIIASGIGAITSSDVTLAVASTAVIIGFNVRADSAAKKLAEVDGVELRYYNIIYDLIDDVKKAMTGLLSPDMKEQIIGIAEVREVYRSSKFGSIAGCMVVEGAVKRTNPIRVLRDNVVIYEGTLESLKRFKDDASEVKKGMECGIGVKNYNDVREGDQIEVFEVIEVAKEL.

Over residues 120–132 (RNSVNLVQPQQEK) the composition is skewed to polar residues. A disordered region spans residues 120-220 (RNSVNLVQPQ…SGKGFKKANP (101 aa)). Basic and acidic residues predominate over residues 161 to 175 (DEEKSSEDKSTESKN). Residues 205–219 (SKAKKASGKGFKKAN) are compositionally biased toward basic residues. One can recognise a tr-type G domain in the interval 343-510 (SRAPVVTIMG…AVLLQSEVLE (168 aa)). Positions 352–359 (GHVDHGKT) are G1. Residue 352 to 359 (GHVDHGKT) participates in GTP binding. Positions 377–381 (GITQH) are G2. The G3 stretch occupies residues 398–401 (DTPG). GTP contacts are provided by residues 398–402 (DTPGH) and 452–455 (NKID). The segment at 452 to 455 (NKID) is G4. The G5 stretch occupies residues 488–490 (SAK).

It belongs to the TRAFAC class translation factor GTPase superfamily. Classic translation factor GTPase family. IF-2 subfamily.

Its subcellular location is the cytoplasm. Functionally, one of the essential components for the initiation of protein synthesis. Protects formylmethionyl-tRNA from spontaneous hydrolysis and promotes its binding to the 30S ribosomal subunits. Also involved in the hydrolysis of GTP during the formation of the 70S ribosomal complex. The sequence is that of Translation initiation factor IF-2 from Francisella philomiragia subsp. philomiragia (strain ATCC 25017 / CCUG 19701 / FSC 153 / O#319-036).